The sequence spans 548 residues: Nodulation protein NolO (548 aa).

This sequence belongs to the NodU/CmcH family.

In terms of biological role, involved in 6-O-carbamoylation of Nod-factors. The sequence is that of Nodulation protein NolO (nolO) from Bradyrhizobium diazoefficiens (strain JCM 10833 / BCRC 13528 / IAM 13628 / NBRC 14792 / USDA 110).